The primary structure comprises 64 residues: Large ribosomal subunit protein uL29 (64 aa).

Belongs to the universal ribosomal protein uL29 family.

This chain is Large ribosomal subunit protein uL29 (rpl29), found in Methanothermobacter thermautotrophicus (strain ATCC 29096 / DSM 1053 / JCM 10044 / NBRC 100330 / Delta H) (Methanobacterium thermoautotrophicum).